The chain runs to 318 residues: Type II restriction enzyme HaeIII (318 aa).

The enzyme catalyses Endonucleolytic cleavage of DNA to give specific double-stranded fragments with terminal 5'-phosphates.. Functionally, a P subtype restriction enzyme that recognizes the double-stranded sequence 5'-GGCC-3' and cleaves after G-2. This is Type II restriction enzyme HaeIII (haeIIIR) from Haemophilus aegyptius.